Reading from the N-terminus, the 489-residue chain is Aspartyl/glutamyl-tRNA(Asn/Gln) amidotransferase subunit B (489 aa).

It belongs to the GatB/GatE family. GatB subfamily. Heterotrimer of A, B and C subunits.

It carries out the reaction L-glutamyl-tRNA(Gln) + L-glutamine + ATP + H2O = L-glutaminyl-tRNA(Gln) + L-glutamate + ADP + phosphate + H(+). It catalyses the reaction L-aspartyl-tRNA(Asn) + L-glutamine + ATP + H2O = L-asparaginyl-tRNA(Asn) + L-glutamate + ADP + phosphate + 2 H(+). Allows the formation of correctly charged Asn-tRNA(Asn) or Gln-tRNA(Gln) through the transamidation of misacylated Asp-tRNA(Asn) or Glu-tRNA(Gln) in organisms which lack either or both of asparaginyl-tRNA or glutaminyl-tRNA synthetases. The reaction takes place in the presence of glutamine and ATP through an activated phospho-Asp-tRNA(Asn) or phospho-Glu-tRNA(Gln). This Polynucleobacter asymbioticus (strain DSM 18221 / CIP 109841 / QLW-P1DMWA-1) (Polynucleobacter necessarius subsp. asymbioticus) protein is Aspartyl/glutamyl-tRNA(Asn/Gln) amidotransferase subunit B.